A 39-amino-acid polypeptide reads, in one-letter code: U1-ectatotoxin-Et1b subunit A (39 aa).

Cysteine 14 and cysteine 35 are disulfide-bonded.

This sequence belongs to the ectatomin family. Ectatomin-Et subfamily. As to quaternary structure, heterodimer of subunits A and B; disulfide-linked. In terms of tissue distribution, expressed by the venom gland.

The protein localises to the secreted. It localises to the target cell membrane. This Ectatomma tuberculatum (Selva ant) protein is U1-ectatotoxin-Et1b subunit A.